The following is a 441-amino-acid chain: Tryptophan aminotransferase-related protein 1 (441 aa).

Residues Tyr-110, 152–153 (ST), Asn-219, 239–242 (DLAY), 262–265 (TVSK), and Arg-273 contribute to the pyridoxal 5'-phosphate site. At Lys-265 the chain carries N6-(pyridoxal phosphate)lysine.

This sequence belongs to the alliinase family. Requires pyridoxal 5'-phosphate as cofactor. Highly expressed in anthers. Expressed at low levels in ovaries.

The catalysed reaction is L-tryptophan + 2-oxoglutarate = indole-3-pyruvate + L-glutamate. It functions in the pathway plant hormone metabolism; auxin biosynthesis. Functionally, probable tryptophan aminotransferase that may be involved in the regulation of auxin production in developing rice grains. This chain is Tryptophan aminotransferase-related protein 1, found in Oryza sativa subsp. japonica (Rice).